A 71-amino-acid polypeptide reads, in one-letter code: Large ribosomal subunit protein uL29 (71 aa).

The protein belongs to the universal ribosomal protein uL29 family.

The protein is Large ribosomal subunit protein uL29 of Rickettsia typhi (strain ATCC VR-144 / Wilmington).